We begin with the raw amino-acid sequence, 843 residues long: Protein P (843 aa).

The tract at residues 1 to 177 (MPLSYQHFRR…FCGSPYSWEQ (177 aa)) is terminal protein domain (TP). Positions 178 to 346 (ELQHGSTSLN…YCLSHIINLL (169 aa)) are spacer. A disordered region spans residues 228–316 (KQGQLANGKQ…VPPSTVGSES (89 aa)). Composition is skewed to polar residues over residues 262–276 (TGHS…TSRF), 286–299 (NPSL…TSTG), and 307–316 (VPPSTVGSES). Positions 347–690 (EDWGPCYEHG…YMNLYPVARQ (344 aa)) are polymerase/reverse transcriptase domain (RT). The region spanning 357–600 (EHHIRTPRTP…YSLHFMGYII (244 aa)) is the Reverse transcriptase domain. Residues Asp-429, Asp-551, and Asp-552 each contribute to the Mg(2+) site.

Belongs to the hepadnaviridae P protein family.

The catalysed reaction is DNA(n) + a 2'-deoxyribonucleoside 5'-triphosphate = DNA(n+1) + diphosphate. It carries out the reaction Endonucleolytic cleavage to 5'-phosphomonoester.. Activated by host HSP70 and HSP40 in vitro to be able to bind the epsilon loop of the pgRNA. Because deletion of the RNase H region renders the protein partly chaperone-independent, the chaperones may be needed indirectly to relieve occlusion of the RNA-binding site by this domain. Inhibited by several reverse-transcriptase inhibitors: Lamivudine, Adefovir and Entecavir. Multifunctional enzyme that converts the viral RNA genome into dsDNA in viral cytoplasmic capsids. This enzyme displays a DNA polymerase activity that can copy either DNA or RNA templates, and a ribonuclease H (RNase H) activity that cleaves the RNA strand of RNA-DNA heteroduplexes in a partially processive 3'- to 5'-endonucleasic mode. Neo-synthesized pregenomic RNA (pgRNA) are encapsidated together with the P protein, and reverse-transcribed inside the nucleocapsid. Initiation of reverse-transcription occurs first by binding the epsilon loop on the pgRNA genome, and is initiated by protein priming, thereby the 5'-end of (-)DNA is covalently linked to P protein. Partial (+)DNA is synthesized from the (-)DNA template and generates the relaxed circular DNA (RC-DNA) genome. After budding and infection, the RC-DNA migrates in the nucleus, and is converted into a plasmid-like covalently closed circular DNA (cccDNA). The activity of P protein does not seem to be necessary for cccDNA generation, and is presumably released from (+)DNA by host nuclear DNA repair machinery. This chain is Protein P, found in Homo sapiens (Human).